Consider the following 81-residue polypeptide: Insect-toxin Cn10 (81 aa).

A signal peptide spans 1–13; sequence ITACLVLIGTVCA. Residues 14–79 enclose the LCN-type CS-alpha/beta domain; it reads KEGYLVNKST…TYPIPGKTCR (66 aa). 4 disulfides stabilise this stretch: C25–C78, C29–C54, C38–C59, and C42–C61. A propeptide (removed by a carboxypeptidase) is located at residue K81.

The protein belongs to the long (4 C-C) scorpion toxin superfamily. Sodium channel inhibitor family. Beta subfamily. As to expression, expressed by the venom gland.

It is found in the secreted. In terms of biological role, beta toxins bind voltage-independently at site-4 of sodium channels (Nav) and shift the voltage of activation toward more negative potentials thereby affecting sodium channel activation and promoting spontaneous and repetitive firing. Is toxic on insects and crustaceans, but not on mammals. This is Insect-toxin Cn10 from Centruroides noxius (Mexican scorpion).